A 181-amino-acid chain; its full sequence is tRNA (cytidine(56)-2'-O)-methyltransferase (181 aa).

S-adenosyl-L-methionine is bound by residues Leu-88, 115–119, and 133–140; these read GGEKV and IGNQPHSE.

The protein belongs to the aTrm56 family. As to quaternary structure, homodimer.

Its subcellular location is the cytoplasm. It carries out the reaction cytidine(56) in tRNA + S-adenosyl-L-methionine = 2'-O-methylcytidine(56) in tRNA + S-adenosyl-L-homocysteine + H(+). Functionally, specifically catalyzes the AdoMet-dependent 2'-O-ribose methylation of cytidine at position 56 in tRNAs. The sequence is that of tRNA (cytidine(56)-2'-O)-methyltransferase from Thermofilum pendens (strain DSM 2475 / Hrk 5).